The following is a 621-amino-acid chain: Pentatricopeptide repeat-containing protein At1g12620 (621 aa).

PPR repeat units follow at residues Gly36–Pro70, Arg71–His105, Asn106–Pro140, Asp141–Pro175, Thr176–Pro210, Asn211–Leu245, Asp246–Ala280, Asp281–Pro315, Asp316–Pro350, Asp351–Pro385, Asn386–Ala420, Asp421–Pro455, Asp456–Leu490, Asp491–Pro525, Asp526–Pro560, and Asn561–Val595.

Belongs to the PPR family. P subfamily.

This Arabidopsis thaliana (Mouse-ear cress) protein is Pentatricopeptide repeat-containing protein At1g12620.